A 377-amino-acid chain; its full sequence is MNNTEYYDRLGLSKDASQDEIKRAYRKLSKKYHPDINKEPGAEEKYKEILEAYETLSDAQKRAAYDQYGPDGANGFGGQGSFGGFDGGAGFGGFEDIFSSFFGGGATRNPNAPRQGDDLQYRVNLSFEEAVFGAEKEIHYNREVTCKTCSGSGAKPGTSPVTCGRCHGHGVINVDTQTPLGMMRRQVTCDVCHGTGQEIKDPCQTCHGTGREKQSHTVSVKIPAGVETGQQIRLAGQGEAGFNGGPYGDLFVVINVNPSDKFTRDGSTIYYTLNISFVQAALGDTVEVPTVHGNVEMVIPAGTQTGKTFRLKGKGAPRLRGGSQGDQLVTVKIVTPTKLNDAQKEALLAFAKASGDEKVAPQKKGFFNKVKDVLEDL.

The 65-residue stretch at 5 to 69 (EYYDRLGLSK…QKRAAYDQYG (65 aa)) folds into the J domain. The CR-type zinc finger occupies 133 to 215 (GAEKEIHYNR…CHGTGREKQS (83 aa)). Zn(2+)-binding residues include C146, C149, C163, C166, C189, C192, C203, and C206. CXXCXGXG motif repeat units follow at residues 146–153 (CKTCSGSG), 163–170 (CGRCHGHG), 189–196 (CDVCHGTG), and 203–210 (CQTCHGTG).

The protein belongs to the DnaJ family. Homodimer. Requires Zn(2+) as cofactor.

The protein localises to the cytoplasm. Its function is as follows. Participates actively in the response to hyperosmotic and heat shock by preventing the aggregation of stress-denatured proteins and by disaggregating proteins, also in an autonomous, DnaK-independent fashion. Unfolded proteins bind initially to DnaJ; upon interaction with the DnaJ-bound protein, DnaK hydrolyzes its bound ATP, resulting in the formation of a stable complex. GrpE releases ADP from DnaK; ATP binding to DnaK triggers the release of the substrate protein, thus completing the reaction cycle. Several rounds of ATP-dependent interactions between DnaJ, DnaK and GrpE are required for fully efficient folding. Also involved, together with DnaK and GrpE, in the DNA replication of plasmids through activation of initiation proteins. The sequence is that of Chaperone protein DnaJ from Streptococcus thermophilus (strain CNRZ 1066).